Reading from the N-terminus, the 249-residue chain is MGLPQPGLWLKRLWVLLEVAVHVVVGKVLLILFPDRVKRNILAMGEKTGMTRNPHFSHDNWIPTFFSTQYFWFVLKVRWQRLEDTTELGGLAPNCPVVRLSGQRCNIWEFMQGNRPLVLNFGSCTUPSFMFKFDQFKRLIEDFSSIADFLVIYIEEAHASDGWAFKNNMDIRNHQNLQDRLQAAHLLLARSPQCPVVVDTMQNQSSQLYAALPERLYIIQEGRILYKGKSGPWNYNPEEVRAVLEKLHS.

Residues 1 to 12 (MGLPQPGLWLKR) lie on the Extracellular side of the membrane. The chain crosses the membrane as a helical; Signal-anchor for type III membrane protein span at residues 13 to 33 (LWVLLEVAVHVVVGKVLLILF). Residues 34-249 (PDRVKRNILA…VRAVLEKLHS (216 aa)) lie on the Cytoplasmic side of the membrane. U126 is a catalytic residue. U126 is a non-standard amino acid (selenocysteine).

Belongs to the iodothyronine deiodinase family. Predominantly monomer. Can form homodimers but homodimerization is not essential for enzyme activity.

The protein localises to the cell membrane. The protein resides in the endoplasmic reticulum membrane. It localises to the basolateral cell membrane. It catalyses the reaction 3,3',5-triiodo-L-thyronine + iodide + A + H(+) = L-thyroxine + AH2. It carries out the reaction 3,3',5'-triiodo-L-thyronine + iodide + A + H(+) = L-thyroxine + AH2. The enzyme catalyses 3,3'-diiodo-L-thyronine + iodide + A + H(+) = 3,3',5'-triiodo-L-thyronine + AH2. The catalysed reaction is 3,3'-diiodo-L-thyronine + iodide + A + H(+) = 3,3',5-triiodo-L-thyronine + AH2. It catalyses the reaction 3'-iodo-L-thyronine + iodide + A + H(+) = 3',5'-diiodo-L-thyronine + AH2. It carries out the reaction 3-iodo-L-thyronine + iodide + A + H(+) = 3,5-diiodo-L-thyronine + AH2. The enzyme catalyses 3-iodo-L-thyronine + iodide + A + H(+) = 3,3'-diiodo-L-thyronine + AH2. The catalysed reaction is 3,3'-diiodothyronamine + iodide + A + H(+) = 3,3',5'-triiodothyronamine + AH2. It catalyses the reaction 3'-iodothyronamine + iodide + A + H(+) = 3',5'-diiodothyronamine + AH2. It carries out the reaction 3-iodothyronamine + iodide + A + H(+) = 3,3'-diiodothyronamine + AH2. The enzyme catalyses 3,3'-diiodothyronamine + iodide + A + H(+) = 3,3',5-triiodothyronamine + AH2. The catalysed reaction is 3-iodothyronamine + iodide + A + H(+) = 3,5-diiodothyronamine + AH2. It catalyses the reaction 3,3'-diiodo-L-thyronine sulfate + iodide + A + H(+) = 3,3',5'-triiodo-L-thyronine sulfate + AH2. It carries out the reaction 3,3',5'-triiodo-L-thyronine sulfate + iodide + A + H(+) = L-thyroxine sulfate + AH2. The enzyme catalyses 3,3'-diiodo-L-thyronine sulfate + iodide + A + H(+) = 3,3',5-triiodo-L-thyronine sulfate + AH2. With respect to regulation, deiodination of substrates 3,3',5'-triiodothyronine, 3,3',5'-triiodothyronamine and 3',5'- diiodothyronamine are inhibited by 6n-propyl-2-thiouracil (PTU). Functionally, plays a crucial role in the metabolism of thyroid hormones (TH) and has specific roles in TH activation and inactivation by deiodination. Catalyzes the deiodination of L-thyroxine (T4) to 3,5,3'-triiodothyronine (T3), 3,3',5'-triiodothyronine (rT3) to 3,3'-diiodothyronine (3,3'-T2) and 3',5'-diiodothyronine (3',5'-T2) to 3'-monoiodothyronine (3'-T1) via outer-ring deiodination (ORD). Catalyzes the deiodination of T4 to 3,3',5'-triiodothyronine (rT3) via inner-ring deiodination (IRD). Catalyzes the deiodination of T3 to 3,3'-T2, 3,5-diiodothyronine (3,5-T2) to 3- monoiodothyronine (3-T1) and 3,3'-T2 to 3-T1 via IRD. Catalyzes the phenolic ring deiodinations of 3,3',5'-triiodothyronamine and 3',5'-diiodothyronamine. Catalyzes the phenolic ring deiodination of 3,3'-diiodothyronamine and tyrosyl ring deiodinations of 3,5,3'-triiodothyronamine and 3,5-diiodothyronamine. Catalyzes the deiodination of L-thyroxine sulfate and 3,3',5-triiodo-L-thyronine sulfate via IRD and of 3,3',5'-triiodo-L-thyronine sulfate via ORD. The sequence is that of Type I iodothyronine deiodinase (DIO1) from Homo sapiens (Human).